A 308-amino-acid chain; its full sequence is MQIKFLTTLATVLTSVAAMGDLAFNLGVKNDDGTCKDVSTFEGDLDFLKSHSKIIKTYAVSDCNTLQNLGPAAEAEGFQIQLGIWPNDDAHFEAEKEALQNYLPKISVSTIKIFLVGSEALYREDLTASELASKINEIKDLVKGIKDKNGKSYSSVPVGTVDSWNVLVDGASKPAIDAADVVYSNSFSYWQKNSQANASYSLFDDVMQALQTLQTAKGSTDIEFWVGETGWPTDGSSYGDSVPSVENAADQWQKGICALRAWGINVAVYEAFDEAWKPDTSGTSSVEKHWGVWQSDKTLKYSIDCKFN.

A signal peptide spans 1–18 (MQIKFLTTLATVLTSVAA). The active-site Proton donor is the glutamate 119. N-linked (GlcNAc...) asparagine glycosylation occurs at asparagine 197. Catalysis depends on glutamate 228, which acts as the Nucleophile.

It belongs to the glycosyl hydrolase 17 family.

Its subcellular location is the secreted. The protein localises to the cell wall. The protein resides in the cytoplasm. The catalysed reaction is Successive hydrolysis of beta-D-glucose units from the non-reducing ends of (1-&gt;3)-beta-D-glucans, releasing alpha-glucose.. Cell wall glucan 1,3-beta-glucosidase involved in cell wall biosynthesis and virulence. Crucial for delivery of beta-1,3-glucan to the biofilm matrix and for accumulation of mature matrix biomass. Plays a role as a major antigen in human systemic candidiasis patients. The sequence is that of Glucan 1,3-beta-glucosidase BGL2 (BGL2) from Candida albicans (strain SC5314 / ATCC MYA-2876) (Yeast).